Here is a 142-residue protein sequence, read N- to C-terminus: Large ribosomal subunit protein uL13 (142 aa).

The protein belongs to the universal ribosomal protein uL13 family. Part of the 50S ribosomal subunit.

Its function is as follows. This protein is one of the early assembly proteins of the 50S ribosomal subunit, although it is not seen to bind rRNA by itself. It is important during the early stages of 50S assembly. The polypeptide is Large ribosomal subunit protein uL13 (Vibrio campbellii (strain ATCC BAA-1116)).